The chain runs to 214 residues: Quinolone resistance pentapeptide repeat protein QnrB96 (214 aa).

Pentapeptide repeat domains lie at 23–103 (STFH…SFMN) and 116–189 (ITNT…VRGV).

This sequence belongs to the pentapeptide repeat protein family.

Confers reduced sensitivity to the fluoroquinolone antibiotic ciprofloxacin (five-fold increase in minimum inhibitory concentration) when expressed in E.coli. The polypeptide is Quinolone resistance pentapeptide repeat protein QnrB96 (Scandinavium goeteborgense).